Here is a 276-residue protein sequence, read N- to C-terminus: Large ribosomal subunit protein uL2 (276 aa).

A disordered region spans residues 224-258 (VAMNPVDHPHGGGEGRTGEGRVPVSPWGTPTKGYR). The span at 230–242 (DHPHGGGEGRTGE) shows a compositional bias: basic and acidic residues.

This sequence belongs to the universal ribosomal protein uL2 family. As to quaternary structure, part of the 50S ribosomal subunit. Forms a bridge to the 30S subunit in the 70S ribosome.

One of the primary rRNA binding proteins. Required for association of the 30S and 50S subunits to form the 70S ribosome, for tRNA binding and peptide bond formation. It has been suggested to have peptidyltransferase activity; this is somewhat controversial. Makes several contacts with the 16S rRNA in the 70S ribosome. The chain is Large ribosomal subunit protein uL2 from Polynucleobacter necessarius subsp. necessarius (strain STIR1).